Consider the following 425-residue polypeptide: Alpha-N-acetylgalactosaminidase (425 aa).

Residues 29 to 30 (NR), E51, 99 to 102 (WLTH), 119 to 120 (EV), and N148 each bind NAD(+). Residue Y177 participates in substrate binding. NAD(+) is bound by residues 194–198 (FHNHW) and Y211. Residues 211 to 214 (YPTH) and Y293 each bind substrate.

It belongs to the Gfo/Idh/MocA family. Glycosyl hydrolase 109 subfamily. The cofactor is NAD(+).

It carries out the reaction Cleavage of non-reducing alpha-(1-&gt;3)-N-acetylgalactosamine residues from human blood group A and AB mucin glycoproteins, Forssman hapten and blood group A lacto series glycolipids.. Functionally, glycosidase that has specific alpha-N-acetylgalactosaminidase activity. The protein is Alpha-N-acetylgalactosaminidase of Bacteroides fragilis (strain ATCC 25285 / DSM 2151 / CCUG 4856 / JCM 11019 / LMG 10263 / NCTC 9343 / Onslow / VPI 2553 / EN-2).